Here is a 402-residue protein sequence, read N- to C-terminus: Phosphoglycerate kinase (402 aa).

Substrate-binding positions include 24–26 (DFN), Arg-40, 63–66 (HFGR), Arg-122, and Arg-155. Residues Lys-206, Gly-297, Glu-328, and 358-361 (GGDS) contribute to the ATP site.

It belongs to the phosphoglycerate kinase family. Monomer.

It is found in the cytoplasm. It catalyses the reaction (2R)-3-phosphoglycerate + ATP = (2R)-3-phospho-glyceroyl phosphate + ADP. It participates in carbohydrate degradation; glycolysis; pyruvate from D-glyceraldehyde 3-phosphate: step 2/5. The chain is Phosphoglycerate kinase from Prochlorococcus marinus (strain MIT 9312).